The chain runs to 200 residues: 3-isopropylmalate dehydratase small subunit (200 aa).

Belongs to the LeuD family. LeuD type 1 subfamily. Heterodimer of LeuC and LeuD.

The catalysed reaction is (2R,3S)-3-isopropylmalate = (2S)-2-isopropylmalate. The protein operates within amino-acid biosynthesis; L-leucine biosynthesis; L-leucine from 3-methyl-2-oxobutanoate: step 2/4. Catalyzes the isomerization between 2-isopropylmalate and 3-isopropylmalate, via the formation of 2-isopropylmaleate. This Actinobacillus pleuropneumoniae serotype 3 (strain JL03) protein is 3-isopropylmalate dehydratase small subunit.